Consider the following 545-residue polypeptide: Glucose-6-phosphate isomerase (545 aa).

The active-site Proton donor is Glu-351. Catalysis depends on residues His-382 and Lys-510.

The protein belongs to the GPI family.

It localises to the cytoplasm. The enzyme catalyses alpha-D-glucose 6-phosphate = beta-D-fructose 6-phosphate. It functions in the pathway carbohydrate biosynthesis; gluconeogenesis. The protein operates within carbohydrate degradation; glycolysis; D-glyceraldehyde 3-phosphate and glycerone phosphate from D-glucose: step 2/4. Functionally, catalyzes the reversible isomerization of glucose-6-phosphate to fructose-6-phosphate. The polypeptide is Glucose-6-phosphate isomerase (Shewanella frigidimarina (strain NCIMB 400)).